The primary structure comprises 395 residues: MATVDRWLLPDGIEEVLPPEAACIEVARRQVLDLFQSWGYEFVVTPHIEYLESLLTGAGSDLDLRTFKVIDPQSGRQMGFRADITPQVARIDAHTLKREGPSRLCYAGSVLHAQPRALSSSRSPIQLGAELYGDASPSSDVEVISLMLAMLQLADVPDVHMDLGHVGIYRGLARAAGLSGEVEQQLFDALQRKAIDEVVALTADLPQELASMLRALVDLCGGREVLDAARDRLAGAPAPVLAALNDLLAIAERLAARFPQLPLYFDLGELRGYHYHTGVVFAVFVPGVGQSIAQGGRYDDIGADFGRARPATGFSTDLKTLVTLGQAEIVLPSGGIWVPDSTDAALWQQVCQLRSEGQRVVQALPGQQASAAREADCDRQLIQHGEHWQVMPLAS.

The protein belongs to the class-II aminoacyl-tRNA synthetase family. HisZ subfamily. As to quaternary structure, heteromultimer composed of HisG and HisZ subunits.

The protein localises to the cytoplasm. It participates in amino-acid biosynthesis; L-histidine biosynthesis; L-histidine from 5-phospho-alpha-D-ribose 1-diphosphate: step 1/9. Functionally, required for the first step of histidine biosynthesis. May allow the feedback regulation of ATP phosphoribosyltransferase activity by histidine. In Pseudomonas savastanoi pv. phaseolicola (strain 1448A / Race 6) (Pseudomonas syringae pv. phaseolicola (strain 1448A / Race 6)), this protein is ATP phosphoribosyltransferase regulatory subunit.